The chain runs to 380 residues: Protein phosphatase methylesterase 1 (380 aa).

Positions 1–38 are disordered; the sequence is MSALEKSMHLGRLPSRPPLPGSGGSQSGAKMRMGPGRK. Ser-15 is modified (phosphoserine). Arg-16 is modified (asymmetric dimethylarginine; alternate). An Omega-N-methylarginine; alternate modification is found at Arg-16. Ser-42 is modified (phosphoserine). Residues Ser-156 and Asp-181 contribute to the active site. Over residues 255–265 the composition is skewed to acidic residues; that stretch reads IEEEEEDEEGS. The interval 255–280 is disordered; sequence IEEEEEDEEGSESVNKRKKEDDMETK. Residues 268-280 are compositionally biased toward basic and acidic residues; that stretch reads VNKRKKEDDMETK. His-349 is an active-site residue.

It belongs to the AB hydrolase superfamily. In terms of assembly, binds PPP2CA and PPP2CB. Post-translationally, phosphorylated by SIK1 following increases in intracellular sodium, leading to dissociation from the protein phosphatase 2A (PP2A) complex and subsequent dephosphorylation of sodium/potassium-transporting ATPase ATP1A1.

The catalysed reaction is [phosphatase 2A protein]-C-terminal L-leucine methyl ester + H2O = [phosphatase 2A protein]-C-terminal L-leucine + methanol + H(+). Functionally, demethylates proteins that have been reversibly carboxymethylated. Demethylates PPP2CB (in vitro) and PPP2CA. Binding to PPP2CA displaces the manganese ion and inactivates the enzyme. The sequence is that of Protein phosphatase methylesterase 1 (PPME1) from Bos taurus (Bovine).